A 344-amino-acid chain; its full sequence is tRNA (guanine(26)-N(2))-dimethyltransferase (344 aa).

A Trm1 methyltransferase domain is found at 1-334; the sequence is MIVREGSAEI…ASCDLVESLM (334 aa). 3 residues coordinate S-adenosyl-L-methionine: Arg35, Arg60, and Glu76.

Belongs to the class I-like SAM-binding methyltransferase superfamily. Trm1 family.

The catalysed reaction is guanosine(26) in tRNA + 2 S-adenosyl-L-methionine = N(2)-dimethylguanosine(26) in tRNA + 2 S-adenosyl-L-homocysteine + 2 H(+). Its function is as follows. Dimethylates a single guanine residue at position 26 of a number of tRNAs using S-adenosyl-L-methionine as donor of the methyl groups. The protein is tRNA (guanine(26)-N(2))-dimethyltransferase of Thermoplasma acidophilum (strain ATCC 25905 / DSM 1728 / JCM 9062 / NBRC 15155 / AMRC-C165).